The primary structure comprises 63 residues: MAQVCEICGKGPQFGNNISHAHNVTRRRWNVNLRPVKVKVGPTANKRVRVCTSCIKSGKITKA.

Belongs to the bacterial ribosomal protein bL28 family.

The protein is Large ribosomal subunit protein bL28 of Acidobacterium capsulatum (strain ATCC 51196 / DSM 11244 / BCRC 80197 / JCM 7670 / NBRC 15755 / NCIMB 13165 / 161).